Here is a 212-residue protein sequence, read N- to C-terminus: Imidazole glycerol phosphate synthase subunit HisH (212 aa).

One can recognise a Glutamine amidotransferase type-1 domain in the interval 1–212; sequence MLAILDYKAG…YEYCKEVSDA (212 aa). Catalysis depends on C79, which acts as the Nucleophile. Residues H187 and E189 contribute to the active site.

As to quaternary structure, heterodimer of HisH and HisF.

Its subcellular location is the cytoplasm. It catalyses the reaction 5-[(5-phospho-1-deoxy-D-ribulos-1-ylimino)methylamino]-1-(5-phospho-beta-D-ribosyl)imidazole-4-carboxamide + L-glutamine = D-erythro-1-(imidazol-4-yl)glycerol 3-phosphate + 5-amino-1-(5-phospho-beta-D-ribosyl)imidazole-4-carboxamide + L-glutamate + H(+). It carries out the reaction L-glutamine + H2O = L-glutamate + NH4(+). It functions in the pathway amino-acid biosynthesis; L-histidine biosynthesis; L-histidine from 5-phospho-alpha-D-ribose 1-diphosphate: step 5/9. In terms of biological role, IGPS catalyzes the conversion of PRFAR and glutamine to IGP, AICAR and glutamate. The HisH subunit catalyzes the hydrolysis of glutamine to glutamate and ammonia as part of the synthesis of IGP and AICAR. The resulting ammonia molecule is channeled to the active site of HisF. This chain is Imidazole glycerol phosphate synthase subunit HisH, found in Maridesulfovibrio salexigens (strain ATCC 14822 / DSM 2638 / NCIMB 8403 / VKM B-1763) (Desulfovibrio salexigens).